A 127-amino-acid polypeptide reads, in one-letter code: Large ribosomal subunit protein bL21 (127 aa).

A disordered region spans residues 102-127 (TDNAKPTKGPRPKKAKAEAPAADAAE).

It belongs to the bacterial ribosomal protein bL21 family. Part of the 50S ribosomal subunit. Contacts protein L20.

Functionally, this protein binds to 23S rRNA in the presence of protein L20. This chain is Large ribosomal subunit protein bL21, found in Bradyrhizobium sp. (strain BTAi1 / ATCC BAA-1182).